A 783-amino-acid polypeptide reads, in one-letter code: MSQTVTIQEPRPNDQRIPYQCREVRRAKGGFANRTYDYLYDPLFIVSSERDHAQANIQATLIRSRLKKVPNFRSMFSNLFHHPRYSMYWSKTDPVPLHVTREWRGQEAKHKEVLRLQAAMDTSFQMPKEKDEDPDVSGKNRYKFFDRPFLPFLQQMPLNVVLSPVKTQPLLLTPESSKYAIIPTKSTVATQTDYRDADVQTDPYSPEYVVCQDTIPELLTLANLTWGRGLPAGQAEVEIIERAREKRAWEATLPPLNDSVQAEKRRKMMNAMERKEWAFREGEIEKLQELRLEVLKQLLKRREEDQNELNMRHLNDQWYKLQEAKEAKVAQIRHKHVSDIRKLMGKGKNIEGKLQRRDIISDYSNFASQVYGPLSRLGRFPDNNSEDFVVRNHYLNTYEGLVELESSLPDFVTQPRIKPPKPQIITTKAGFLKRTARMDYELAEVHKALVDKKNKGLEGTKSLRFLQKNPISQARLPTPSLEMTSYEEGEIEMAVIYLQKLLRGRVVQNMMFEGKEKRLELILELRTSHALQEDDKLVKKAEKQVTLALQRQRNLHEDKLSVIENHLGDLEGRVLADMFDFLSKELVRLQEERRIHAFAMLAERQRRMREAEESGRRQVEQKRLQQEDMIFKEVIKVHQSTVTSYLEDIILNTEERTAEEQARKEIEKIAEEINNIAYEMENRRTYLQSEEIVAELVYSFLIPEVQKDFVKEKVRNAQRKHILAAHEIIHSNTETMLEEQVYKELQSEDFELEEEAESLDSEVPTVSVSKTSTIKPTQDEGEG.

The span at 748-760 (EDFELEEEAESLD) shows a compositional bias: acidic residues. A disordered region spans residues 748–783 (EDFELEEEAESLDSEVPTVSVSKTSTIKPTQDEGEG). Positions 764–776 (PTVSVSKTSTIKP) are enriched in polar residues.

Belongs to the CFAP91 family. Part of a complex containing MYCBP, AKAP1 and PRKAR2B. Interacts with MYCBP and AKAP1. Interacts with CFAP61. Phosphorylated by PKA. As to expression, expressed in the testis, in cells involved in spermatogenesis.

The protein resides in the cytoplasm. The protein localises to the mitochondrion. Its subcellular location is the cytoskeleton. It localises to the cilium axoneme. Its function is as follows. Involved in sperm flagellum axonemal organization and function. May regulate cilium motility through its role in the assembly of the axonemal radial spokes. The polypeptide is Cilia- and flagella-associated protein 91 (Mus musculus (Mouse)).